The following is a 636-amino-acid chain: MRKTKKISFLIFWVVLISIIGAISSQQCNETGYFEPWKTYDTNRRQILTSLASKVVDHYGFYNSSIGKVPDEVHVMGMCIDGTEPTVCSDCLKVAADQLQENCPNQTEAYTWTPHKTLCFARYSNSSFFKRVGLHPLYMEHSNVDIKSNLTYLNTIWEALTDRLMSDASSDYNASLSSRRYYAANVTNLTNFQNIYALMLCTPDLEKGACHNCLEKAVSEYGNLRMQRGIVAWPSCCFRWDLYPFIGAFNLTLSPPPGSKRNISVGFFVAIVVATGVVISVLSTLVVVLVCRKRKTDPPEESPKYSLQYDLKTIEAATCTFSKCNMLGQGGFGEVFKGVLQDGSEIAVKRLSKESAQGVQEFQNETSLVAKLQHRNLVGVLGFCMEGEEKILVYEFVPNKSLDQFLFEPTKKGQLDWAKRYKIIVGTARGILYLHHDSPLKIIHRDLKASNILLDAEMEPKVADFGMARIFRVDQSRADTRRVVGTHGYISPEYLMHGQFSVKSDVYSFGVLVLEIISGKRNSNFHETDESGKNLVTYAWRHWRNGSPLELVDSELEKNYQSNEVFRCIHIALLCVQNDPEQRPNLSTIIMMLTSNSITLPVPQSPVYEGMDMFLPSIKSLPGSVNDSLIDDLVPR.

Positions 1-25 are cleaved as a signal peptide; that stretch reads MRKTKKISFLIFWVVLISIIGAISS. Gnk2-homologous domains lie at 26–128 and 138–245; these read QQCN…NSSF and YMEH…LYPF. The Extracellular portion of the chain corresponds to 26–266; sequence QQCNETGYFE…PGSKRNISVG (241 aa). Residues N29, N63, N105, N125, N149, N173, N185, N188, N250, and N262 are each glycosylated (N-linked (GlcNAc...) asparagine). A helical transmembrane segment spans residues 267–287; that stretch reads FFVAIVVATGVVISVLSTLVV. Topologically, residues 288–636 are cytoplasmic; the sequence is VLVCRKRKTD…DSLIDDLVPR (349 aa). Residues 321–600 enclose the Protein kinase domain; it reads FSKCNMLGQG…MMLTSNSITL (280 aa). ATP-binding positions include 327-335 and K349; that span reads LGQGGFGEV. Y394 carries the post-translational modification Phosphotyrosine. D446 functions as the Proton acceptor in the catalytic mechanism. S450 is subject to Phosphoserine. Residue T486 is modified to Phosphothreonine. Y494 carries the phosphotyrosine modification.

Belongs to the protein kinase superfamily. Ser/Thr protein kinase family. CRK subfamily.

Its subcellular location is the membrane. It carries out the reaction L-seryl-[protein] + ATP = O-phospho-L-seryl-[protein] + ADP + H(+). The catalysed reaction is L-threonyl-[protein] + ATP = O-phospho-L-threonyl-[protein] + ADP + H(+). The polypeptide is Putative cysteine-rich receptor-like protein kinase 33 (CRK33) (Arabidopsis thaliana (Mouse-ear cress)).